The primary structure comprises 166 residues: Interferon gamma (166 aa).

The first 23 residues, 1-23 (MKYTSYFLALLLCGLLGFSGSYG), serve as a signal peptide directing secretion. Q24 is subject to Pyrrolidone carboxylic acid. N-linked (GlcNAc...) asparagine glycosylation is found at N39 and N106.

The protein belongs to the type II (or gamma) interferon family. Homodimer. Interacts with IFNGR1 (via extracellular domain); this interaction promotes IFNGR1 dimerization. In terms of tissue distribution, released primarily from activated T lymphocytes.

The protein resides in the secreted. In terms of biological role, type II interferon produced by immune cells such as T-cells and NK cells that plays crucial roles in antimicrobial, antiviral, and antitumor responses by activating effector immune cells and enhancing antigen presentation. Primarily signals through the JAK-STAT pathway after interaction with its receptor IFNGR1 to affect gene regulation. Upon IFNG binding, IFNGR1 intracellular domain opens out to allow association of downstream signaling components JAK2, JAK1 and STAT1, leading to STAT1 activation, nuclear translocation and transcription of IFNG-regulated genes. Many of the induced genes are transcription factors such as IRF1 that are able to further drive regulation of a next wave of transcription. Plays a role in class I antigen presentation pathway by inducing a replacement of catalytic proteasome subunits with immunoproteasome subunits. In turn, increases the quantity, quality, and repertoire of peptides for class I MHC loading. Increases the efficiency of peptide generation also by inducing the expression of activator PA28 that associates with the proteasome and alters its proteolytic cleavage preference. Up-regulates as well MHC II complexes on the cell surface by promoting expression of several key molecules such as cathepsins B/CTSB, H/CTSH, and L/CTSL. Participates in the regulation of hematopoietic stem cells during development and under homeostatic conditions by affecting their development, quiescence, and differentiation. The sequence is that of Interferon gamma (IFNG) from Bos taurus (Bovine).